Reading from the N-terminus, the 590-residue chain is Protein ecdysoneless homolog (590 aa).

The segment at Glu445–Asp464 is disordered. Over residues Thr455 to Asp464 the composition is skewed to acidic residues.

It belongs to the ECD family.

It is found in the cytoplasm. Its subcellular location is the nucleus. Functionally, involved in the regulation of carbohydrate metabolism. May act as a transcription factor. In Schizosaccharomyces pombe (strain 972 / ATCC 24843) (Fission yeast), this protein is Protein ecdysoneless homolog.